The chain runs to 294 residues: tRNA dimethylallyltransferase (294 aa).

7–14 (GPTGSGKS) is a binding site for ATP. 9–14 (TGSGKS) contacts substrate.

This sequence belongs to the IPP transferase family. As to quaternary structure, monomer. Mg(2+) is required as a cofactor.

It carries out the reaction adenosine(37) in tRNA + dimethylallyl diphosphate = N(6)-dimethylallyladenosine(37) in tRNA + diphosphate. Its function is as follows. Catalyzes the transfer of a dimethylallyl group onto the adenine at position 37 in tRNAs that read codons beginning with uridine, leading to the formation of N6-(dimethylallyl)adenosine (i(6)A). This chain is tRNA dimethylallyltransferase, found in Akkermansia muciniphila (strain ATCC BAA-835 / DSM 22959 / JCM 33894 / BCRC 81048 / CCUG 64013 / CIP 107961 / Muc).